The following is a 439-amino-acid chain: uncharacterized protein (439 aa).

The segment covering 268 to 284 has biased composition (low complexity); sequence QQQQQQQPQHNNNNTQV. The segment at 268–439 is disordered; sequence QQQQQQQPQH…RTRFTTTNLH (172 aa). Over residues 285–328 the composition is skewed to pro residues; the sequence is QPPPPSQQLPPPPKPQPQLPKPQPQKPQPQLPKPPQQPKPPQEP. Residues 350 to 439 show a composition bias toward low complexity; it reads QEQQQQPPQE…RTRFTTTNLH (90 aa).

This is an uncharacterized protein from Dictyostelium discoideum (Social amoeba).